The primary structure comprises 141 residues: Putative pre-16S rRNA nuclease (141 aa).

The protein belongs to the YqgF nuclease family.

It is found in the cytoplasm. Could be a nuclease involved in processing of the 5'-end of pre-16S rRNA. In Shewanella denitrificans (strain OS217 / ATCC BAA-1090 / DSM 15013), this protein is Putative pre-16S rRNA nuclease.